We begin with the raw amino-acid sequence, 430 residues long: L-lysine N6-monooxygenase MbtG (430 aa).

The first 21 residues, 1–21, serve as a signal peptide directing secretion; it reads MTATLAVIGAGPKAVAVAAKA.

This sequence belongs to the lysine N(6)-hydroxylase/L-ornithine N(5)-oxygenase family. FAD is required as a cofactor.

The catalysed reaction is L-lysine + NADPH + O2 = N(6)-hydroxy-L-lysine + NADP(+) + H2O. It participates in siderophore biosynthesis; mycobactin biosynthesis. In terms of biological role, flavoprotein monooxygenase required for N-hydroxylation of the two acylated lysine residues during mycobactin assembly, thus producing the hydroxamate groups necessary for iron sequestration. Is also able, but less efficiently, to hydroxylate L-lysine (non acylated) in vitro. The sequence is that of L-lysine N6-monooxygenase MbtG (mbtG) from Mycobacterium sp. (strain MCS).